We begin with the raw amino-acid sequence, 190 residues long: Flavodoxin-like domain-containing protein BilS (190 aa).

It functions in the pathway porphyrin-containing compound metabolism; protoheme degradation. Functionally, together with BilR, catalyzes reduction of mesobilirubin and/or bilirubin to urobilinogen, a key step during heme degradation. BilS is probably involved in electron transfer for the bilirubin reductase BilR. This is Flavodoxin-like domain-containing protein BilS from Clostridium symbiosum (strain WAL-14163).